A 1755-amino-acid polypeptide reads, in one-letter code: E3 ubiquitin-protein ligase UBR2 (1755 aa).

Residue A2 is modified to N-acetylalanine. K94 participates in a covalent cross-link: Glycyl lysine isopeptide (Lys-Gly) (interchain with G-Cter in ubiquitin). The segment at 97-168 adopts a UBR-type zinc-finger fold; the sequence is HLCGRVFKVG…EGPYCQKHKL (72 aa). The Zn(2+) site is built by C99, C112, C115, C124, C127, H133, and H136. F148 serves as a coordination point for a peptide. A Zn(2+)-binding site is contributed by C149. D150 provides a ligand contact to a peptide. C151 is a binding site for Zn(2+). D153 contacts a peptide. A Glycyl lysine isopeptide (Lys-Gly) (interchain with G-Cter in ubiquitin) cross-link involves residue K158. Position 163 (C163) interacts with Zn(2+). K165 is covalently cross-linked (Glycyl lysine isopeptide (Lys-Gly) (interchain with G-Cter in ubiquitin)). Residue H166 coordinates Zn(2+). Residues K248, K255, and K470 each participate in a glycyl lysine isopeptide (Lys-Gly) (interchain with G-Cter in ubiquitin) cross-link. S476 carries the phosphoserine modification. Residues K488, K568, K779, and K789 each participate in a glycyl lysine isopeptide (Lys-Gly) (interchain with G-Cter in ubiquitin) cross-link. The segment at 1012-1033 is disordered; the sequence is AEAEGTIMEESSRDKDKAERKR. The stretch at 1019 to 1054 forms a coiled coil; it reads MEESSRDKDKAERKRKAEIARLRREKIMAQMSEMQR. Residues 1021–1033 show a composition bias toward basic and acidic residues; sequence ESSRDKDKAERKR. Positions 1108, 1111, 1168, 1170, 1173, 1176, 1210, and 1213 each coordinate Zn(2+). The RING-type; atypical zinc finger occupies 1108–1214; the sequence is CILCQEEQEV…NGEFLCPLCE (107 aa). Residues K1496, K1599, and K1689 each participate in a glycyl lysine isopeptide (Lys-Gly) (interchain with G-Cter in ubiquitin) cross-link. The residue at position 1694 (S1694) is a Phosphoserine. Phosphotyrosine is present on Y1697.

It belongs to the E3 ubiquitin-protein ligase UBR1-like family. In terms of assembly, interacts with UBE2B; promotes the UBE2B-H2A interaction and the ubiquitination of histone H2A by UBE2B and UBR2. Interacts with RECQL4. Interacts with Tex19.1 and Tex19.2; does not lead to Tex19.1 degradation and stabilizes it. Interacts with L1RE1. Interacts with CASP8. Interacts with ATXN3. Interacts with UBE2O. Post-translationally, dephosphorylated by DUSP22 at Ser-1694 and Tyr-1697, leading to subsequent ubiquitination and proteasomal degradation. In terms of processing, 'Lys-48'-linked ubiquitinated at Lys-94, Lys-779 and Lys-1599 following DUSP22-mediated dephosphorylation of Ser-1694 and Tyr-1697 which promotes UBR2 interaction with the SCF(FBW1A) E3 ubiquitin-protein ligase complex. As to expression, highly expressed in skeletal muscle. Also expressed in heart, kidney and testis. Expressed in acinar cells of the pancreas. In testes, expressed primarily in spermatocytes. Expressed in cerebellum.

It localises to the nucleus. Its subcellular location is the chromosome. The catalysed reaction is S-ubiquitinyl-[E2 ubiquitin-conjugating enzyme]-L-cysteine + [acceptor protein]-L-lysine = [E2 ubiquitin-conjugating enzyme]-L-cysteine + N(6)-ubiquitinyl-[acceptor protein]-L-lysine.. The protein operates within protein modification; protein ubiquitination. Functionally, E3 ubiquitin-protein ligase which is a component of the N-end rule pathway. Recognizes and binds to proteins bearing specific N-terminal residues (N-degrons) that are destabilizing according to the N-end rule, leading to their ubiquitination and subsequent degradation. Recognizes both type-1 and type-2 N-degrons, containing positively charged amino acids (Arg, Lys and His) and bulky and hydrophobic amino acids, respectively. Does not ubiquitinate proteins that are acetylated at the N-terminus. In contrast, it strongly binds methylated N-degrons. Plays a critical role in chromatin inactivation and chromosome-wide transcriptional silencing during meiosis via ubiquitination of histone H2A. Binds leucine and is a negative regulator of the leucine-mTOR signaling pathway, thereby controlling cell growth. Required for spermatogenesis, promotes, with Tex19.1, SPO11-dependent recombination foci to accumulate and drive robust homologous chromosome synapsis. Polyubiquitinates LINE-1 retrotransposon encoded, LIRE1, which induces degradation, inhibiting LINE-1 retrotransposon mobilization. Catalyzes ubiquitination and degradation of the N-terminal part of NLRP1B following NLRP1B activation by pathogens and other damage-associated signals: ubiquitination promotes degradation of the N-terminal part and subsequent release of the cleaved C-terminal part of NLRP1B, which polymerizes and forms the NLRP1B inflammasome followed by host cell pyroptosis. Plays a role in T-cell receptor signaling by inducing 'Lys-63'-linked ubiquitination of lymphocyte cell-specific kinase LCK. This activity is regulated by DUSP22, which induces 'Lys-48'-linked ubiquitination of UBR2, leading to its proteasomal degradation by SCF E3 ubiquitin-protein ligase complex. This chain is E3 ubiquitin-protein ligase UBR2, found in Mus musculus (Mouse).